Consider the following 296-residue polypeptide: NAD kinase (296 aa).

Catalysis depends on Asp-73, which acts as the Proton acceptor. Residues 73–74 (DG), Lys-78, 151–152 (NE), Arg-178, Asp-180, and 191–196 (TAHAMS) contribute to the NAD(+) site.

This sequence belongs to the NAD kinase family. A divalent metal cation serves as cofactor.

Its subcellular location is the cytoplasm. The enzyme catalyses NAD(+) + ATP = ADP + NADP(+) + H(+). In terms of biological role, involved in the regulation of the intracellular balance of NAD and NADP, and is a key enzyme in the biosynthesis of NADP. Catalyzes specifically the phosphorylation on 2'-hydroxyl of the adenosine moiety of NAD to yield NADP. The chain is NAD kinase from Francisella tularensis subsp. tularensis (strain FSC 198).